The following is a 382-amino-acid chain: Alanine racemase 1 (382 aa).

The active-site Proton acceptor; specific for D-alanine is the Lys39. Lys39 carries the post-translational modification N6-(pyridoxal phosphate)lysine. Arg138 is a substrate binding site. Tyr265 serves as the catalytic Proton acceptor; specific for L-alanine. Met312 contacts substrate.

Belongs to the alanine racemase family. Pyridoxal 5'-phosphate serves as cofactor.

The catalysed reaction is L-alanine = D-alanine. It participates in amino-acid biosynthesis; D-alanine biosynthesis; D-alanine from L-alanine: step 1/1. In terms of biological role, catalyzes the interconversion of L-alanine and D-alanine. May also act on other amino acids. In Staphylococcus aureus (strain N315), this protein is Alanine racemase 1 (alr1).